Reading from the N-terminus, the 112-residue chain is Large ribosomal subunit protein P2A (112 aa).

The interval 83–112 is disordered; the sequence is GAAPAAEAKKEEKVEEKEESDDDMGFSLFD. Positions 89 to 98 are enriched in basic and acidic residues; that stretch reads EAKKEEKVEE.

The protein belongs to the eukaryotic ribosomal protein P1/P2 family. As to quaternary structure, P1 and P2 exist as dimers at the large ribosomal subunit. Phosphorylated.

Its function is as follows. Plays an important role in the elongation step of protein synthesis. In Zea mays (Maize), this protein is Large ribosomal subunit protein P2A (RPP2A).